Consider the following 174-residue polypeptide: Crossover junction endodeoxyribonuclease RuvC (174 aa).

Residues Asp-8, Glu-67, and Asp-139 contribute to the active site. Residues Asp-8, Glu-67, and Asp-139 each coordinate Mg(2+).

The protein belongs to the RuvC family. As to quaternary structure, homodimer which binds Holliday junction (HJ) DNA. The HJ becomes 2-fold symmetrical on binding to RuvC with unstacked arms; it has a different conformation from HJ DNA in complex with RuvA. In the full resolvosome a probable DNA-RuvA(4)-RuvB(12)-RuvC(2) complex forms which resolves the HJ. The cofactor is Mg(2+).

It is found in the cytoplasm. The catalysed reaction is Endonucleolytic cleavage at a junction such as a reciprocal single-stranded crossover between two homologous DNA duplexes (Holliday junction).. In terms of biological role, the RuvA-RuvB-RuvC complex processes Holliday junction (HJ) DNA during genetic recombination and DNA repair. Endonuclease that resolves HJ intermediates. Cleaves cruciform DNA by making single-stranded nicks across the HJ at symmetrical positions within the homologous arms, yielding a 5'-phosphate and a 3'-hydroxyl group; requires a central core of homology in the junction. The consensus cleavage sequence is 5'-(A/T)TT(C/G)-3'. Cleavage occurs on the 3'-side of the TT dinucleotide at the point of strand exchange. HJ branch migration catalyzed by RuvA-RuvB allows RuvC to scan DNA until it finds its consensus sequence, where it cleaves and resolves the cruciform DNA. This Pseudomonas putida (strain GB-1) protein is Crossover junction endodeoxyribonuclease RuvC.